Consider the following 53-residue polypeptide: Non-classical export protein 1 (53 aa).

The helical transmembrane segment at F7 to Y29 threads the bilayer.

It belongs to the NCE101 family.

It localises to the membrane. Its function is as follows. Involved in a novel pathway of export of proteins that lack a cleavable signal sequence. May be part of the export machinery or may also be a substrate for non-classical export. The polypeptide is Non-classical export protein 1 (NCE101) (Saccharomyces cerevisiae (strain ATCC 204508 / S288c) (Baker's yeast)).